The chain runs to 496 residues: Apolipoprotein N-acyltransferase (496 aa).

Transmembrane regions (helical) follow at residues 6 to 26 (IICF…FFIP), 50 to 70 (FGYL…SIGV), 77 to 97 (FWWA…FFIS), 114 to 134 (LIFC…CTGL), 148 to 168 (ILIQ…VIYI), and 183 to 203 (LKIL…YGAM). One can recognise a CN hydrolase domain in the interval 220 to 464 (VQPSIPQTAK…QGLIPQKLTT (245 aa)). E259 serves as the catalytic Proton acceptor. Residue K322 is part of the active site. The active-site Nucleophile is C372. The helical transmembrane segment at 474–494 (FAMLLPIVFILLIHYLLSLIF) threads the bilayer.

It belongs to the CN hydrolase family. Apolipoprotein N-acyltransferase subfamily.

Its subcellular location is the cell inner membrane. The catalysed reaction is N-terminal S-1,2-diacyl-sn-glyceryl-L-cysteinyl-[lipoprotein] + a glycerophospholipid = N-acyl-S-1,2-diacyl-sn-glyceryl-L-cysteinyl-[lipoprotein] + a 2-acyl-sn-glycero-3-phospholipid + H(+). It participates in protein modification; lipoprotein biosynthesis (N-acyl transfer). Its function is as follows. Catalyzes the phospholipid dependent N-acylation of the N-terminal cysteine of apolipoprotein, the last step in lipoprotein maturation. In Rickettsia typhi (strain ATCC VR-144 / Wilmington), this protein is Apolipoprotein N-acyltransferase.